We begin with the raw amino-acid sequence, 195 residues long: Dephospho-CoA kinase (195 aa).

The region spanning 2–195 is the DPCK domain; the sequence is IISLTGGIGV…DIVDSLNLNT (194 aa). Residue 10 to 15 participates in ATP binding; it reads GVGKSF.

It belongs to the CoaE family.

The protein resides in the cytoplasm. It carries out the reaction 3'-dephospho-CoA + ATP = ADP + CoA + H(+). Its pathway is cofactor biosynthesis; coenzyme A biosynthesis; CoA from (R)-pantothenate: step 5/5. Functionally, catalyzes the phosphorylation of the 3'-hydroxyl group of dephosphocoenzyme A to form coenzyme A. The polypeptide is Dephospho-CoA kinase (Wolbachia pipientis wMel).